Here is a 355-residue protein sequence, read N- to C-terminus: Phosphate acyltransferase (355 aa).

It belongs to the PlsX family. Homodimer. Probably interacts with PlsY.

The protein localises to the cytoplasm. The enzyme catalyses a fatty acyl-[ACP] + phosphate = an acyl phosphate + holo-[ACP]. It participates in lipid metabolism; phospholipid metabolism. Catalyzes the reversible formation of acyl-phosphate (acyl-PO(4)) from acyl-[acyl-carrier-protein] (acyl-ACP). This enzyme utilizes acyl-ACP as fatty acyl donor, but not acyl-CoA. The protein is Phosphate acyltransferase of Rhodospirillum centenum (strain ATCC 51521 / SW).